Reading from the N-terminus, the 882-residue chain is Cadherin-1 (882 aa).

The first 23 residues, 1 to 23 (MGPWSRSLSALCCCCRCNPWLCR), serve as a signal peptide directing secretion. Residues 24-154 (EPEPCIPGFG…PHHGLRRQKR (131 aa)) constitute a propeptide that is removed on maturation. The tract at residues 117 to 137 (EVSAHHHHHHSHHDSPSGTQT) is disordered. Cadherin domains follow at residues 154-262 (RDWV…KPQF), 263-375 (TQEV…APRF), 376-486 (NPTT…APIF), 487-595 (VPPQ…GPVP), and 594-702 (VPEP…RPAE). Over 155–709 (DWVIPPISCP…PAEAGLQVPA (555 aa)) the chain is Extracellular. Ser-280 carries an O-linked (Man...) serine glycan. Thr-285, Thr-358, Thr-470, Thr-472, and Thr-509 each carry an O-linked (Man...) threonine glycan. The N-linked (GlcNAc...) asparagine glycan is linked to Asn-558. 3 O-linked (Man...) threonine glycosylation sites follow: Thr-576, Thr-578, and Thr-580. Residue Asn-637 is glycosylated (N-linked (GlcNAc...) asparagine). The helical transmembrane segment at 710 to 730 (ILGILGGILAFLILILLLLLL) threads the bilayer. At 731-882 (VRRRRVVKEP…ADMYGGGEDD (152 aa)) the chain is on the cytoplasmic side. Residues 747-767 (DTRDNVYYYDEEGGGEEDQDF) form a disordered region. A phosphotyrosine; by SRC mark is found at Tyr-753, Tyr-754, and Tyr-755. Acidic residues predominate over residues 755 to 767 (YDEEGGGEEDQDF). Residues 758–769 (EGGGEEDQDFDL) are required for binding CTNND1 and PSEN1. 5 positions are modified to phosphoserine: Ser-770, Ser-793, Ser-838, Ser-840, and Ser-846. The required for binding alpha, beta and gamma catenins stretch occupies residues 811 to 882 (IDENLKAADS…ADMYGGGEDD (72 aa)).

As to quaternary structure, homodimer; disulfide-linked. Component of an E-cadherin/ catenin adhesion complex composed of at least E-cadherin/CDH1, beta-catenin/CTNNB1 or gamma-catenin/JUP, and potentially alpha-catenin/CTNNA1; the complex is located to adherens junctions. Found in a complex composed of CDH1, RAP1A and PKP3; PKP3 acts as a scaffold protein within the complex, the complex is required for CDH1 localization to mature desmosome cell junctions. Interacts with the TRPV4 and CTNNB1 complex. Interacts with CTNND1. The stable association of CTNNA1 is controversial as CTNNA1 was shown not to bind to F-actin when assembled in the complex. Alternatively, the CTNNA1-containing complex may be linked to F-actin by other proteins such as LIMA1. Interaction with PSEN1, cleaves CDH1 resulting in the disassociation of cadherin-based adherens junctions (CAJs). Interacts with AJAP1 and DLGAP5. Interacts with TBC1D2. Interacts with CAV1. Interacts with PIP5K1C. Interacts with RAB8B. Interacts with DDR1; this stabilizes CDH1 at the cell surface and inhibits its internalization. Interacts with RAPGEF2. Interacts with KLRG1. Forms a ternary complex composed of ADAM10, CADH1 and EPHA4; within the complex, CADH1 is cleaved by ADAM10 which disrupts adherens junctions. Interacts with SPEF1. Interacts with CTNNB1 and PKP2. Interacts with AMOTL2; the interaction may facilitate binding of radial actin fibers to cell junction complexes. Interacts with DSG3; the interaction is required for CDH1 localization to developing adherens junctions. Post-translationally, during apoptosis or with calcium influx, cleaved by a membrane-bound metalloproteinase (ADAM10), PS1/gamma-secretase and caspase-3. Processing by the metalloproteinase, induced by calcium influx, causes disruption of cell-cell adhesion and the subsequent release of beta-catenin into the cytoplasm. The residual membrane-tethered cleavage product is rapidly degraded via an intracellular proteolytic pathway. Cleavage by caspase-3 releases the cytoplasmic tail resulting in disintegration of the actin microfilament system. The gamma-secretase-mediated cleavage promotes disassembly of adherens junctions. During development of the cochlear organ of Corti, cleavage by ADAM10 at adherens junctions promotes pillar cell separation. N-glycosylation at Asn-637 is essential for expression, folding and trafficking. Addition of bisecting N-acetylglucosamine by MGAT3 modulates its cell membrane location. In terms of processing, ubiquitinated by a SCF complex containing SKP2, which requires prior phosphorylation by CK1/CSNK1A1. Ubiquitinated by CBLL1/HAKAI, requires prior phosphorylation at Tyr-754. Post-translationally, O-glycosylated. O-manosylated by TMTC1, TMTC2, TMTC3 or TMTC4. Thr-285 and Thr-509 are O-mannosylated by TMTC2 or TMTC4 but not TMTC1 or TMTC3.

Its subcellular location is the cell junction. The protein resides in the adherens junction. It is found in the cell membrane. It localises to the endosome. The protein localises to the golgi apparatus. Its subcellular location is the trans-Golgi network. The protein resides in the cytoplasm. It is found in the desmosome. Functionally, cadherins are calcium-dependent cell adhesion proteins. They preferentially interact with themselves in a homophilic manner in connecting cells; cadherins may thus contribute to the sorting of heterogeneous cell types. CDH1 is involved in mechanisms regulating cell-cell adhesions, mobility and proliferation of epithelial cells. Promotes organization of radial actin fiber structure and cellular response to contractile forces, via its interaction with AMOTL2 which facilitates anchoring of radial actin fibers to CDH1 junction complexes at the cell membrane. Plays a role in the early stages of desmosome cell-cell junction formation via facilitating the recruitment of DSG2 and DSP to desmosome plaques. Has a potent invasive suppressor role. It is a ligand for integrin alpha-E/beta-7. In terms of biological role, E-Cad/CTF2 promotes non-amyloidogenic degradation of Abeta precursors. Has a strong inhibitory effect on APP C99 and C83 production. The sequence is that of Cadherin-1 (CDH1) from Bos taurus (Bovine).